A 362-amino-acid chain; its full sequence is Serpentine receptor class delta-2 (362 aa).

The next 7 membrane-spanning stretches (helical) occupy residues 27 to 47 (LSCLICLPGALCNAILIYLIW), 57 to 77 (YAIYILNFALFDFATCIISFF), 104 to 124 (FCYFCHCFMCHALAHSQWILL), 144 to 164 (LIRNSVALYSMSLCFLLVYVF), 209 to 229 (LISILYMTIPCVPIYCAILYF), 264 to 284 (GIPIFWLVASGIFTMSQFGII), and 292 to 312 (ITFRLMDCIPLISPIVTIIFV).

This sequence belongs to the nematode receptor-like protein srd family.

It localises to the membrane. Functionally, thought to be a chemosensory receptor. The polypeptide is Serpentine receptor class delta-2 (srd-2) (Caenorhabditis elegans).